The following is a 911-amino-acid chain: Valine--tRNA ligase (911 aa).

A 'HIGH' region motif is present at residues 57 to 67; the sequence is PTVSGSLHVGH. The 'KMSKS' region signature appears at 599–603; it reads KMSKS. Position 602 (K602) interacts with ATP. Residues 882 to 911 are disordered; sequence EESAAEDAPETEVAVEASELGEPPVKKPKH.

Belongs to the class-I aminoacyl-tRNA synthetase family. ValS type 2 subfamily. As to quaternary structure, monomer.

Its subcellular location is the cytoplasm. It carries out the reaction tRNA(Val) + L-valine + ATP = L-valyl-tRNA(Val) + AMP + diphosphate. Catalyzes the attachment of valine to tRNA(Val). As ValRS can inadvertently accommodate and process structurally similar amino acids such as threonine, to avoid such errors, it has a 'posttransfer' editing activity that hydrolyzes mischarged Thr-tRNA(Val) in a tRNA-dependent manner. The chain is Valine--tRNA ligase from Bifidobacterium longum subsp. infantis (strain ATCC 15697 / DSM 20088 / JCM 1222 / NCTC 11817 / S12).